Consider the following 732-residue polypeptide: Wall-associated receptor kinase 2 (732 aa).

A signal peptide spans 1–23; that stretch reads MKVQEGLFVVAVFYLAYTQLVKG. Residues 24 to 329 lie on the Extracellular side of the membrane; the sequence is QPRKECQTRC…RKVRPEYFRW (306 aa). Residues Asn57, Asn75, Asn111, Asn154, Asn217, and Asn246 are each glycosylated (N-linked (GlcNAc...) asparagine). An EGF-like 1 domain is found at 230–277; sequence GDKTCKQVEYRGVCGGNSTCFDSTGGTGYNCKCLEGFEGNPYLPNGCQ. Disulfide bonds link Cys234–Cys249, Cys243–Cys260, Cys262–Cys276, Cys282–Cys295, Cys289–Cys304, and Cys306–Cys318. One can recognise an EGF-like 2; calcium-binding domain in the interval 278 to 319; the sequence is DINECISSRHNCSEHSTCENTKGSFNCNCPSGYRKDSLNSCT. An N-linked (GlcNAc...) asparagine glycan is attached at Asn288. The chain crosses the membrane as a helical span at residues 330 to 350; the sequence is TQIFLGTTIGFSVIMLGISCL. Over 351 to 732 the chain is Cytoplasmic; it reads QQKIKHRKNT…VTTLDIEAGR (382 aa). Thr393 is subject to Phosphothreonine. One can recognise a Protein kinase domain in the interval 404-677; it reads YHESRILGQG…KEVAAELEAL (274 aa). ATP contacts are provided by residues 410 to 418 and Lys432; that span reads LGQGGQGTV. Tyr477 carries the phosphotyrosine modification. Asp529 serves as the catalytic Proton acceptor. Thr563 and Thr568 each carry phosphothreonine. Tyr576 carries the post-translational modification Phosphotyrosine.

The protein belongs to the protein kinase superfamily. Ser/Thr protein kinase family. As to expression, predominantly expressed in green tissues such as stems and leaves. Detected at organ junctions.

It is found in the membrane. The catalysed reaction is L-seryl-[protein] + ATP = O-phospho-L-seryl-[protein] + ADP + H(+). It catalyses the reaction L-threonyl-[protein] + ATP = O-phospho-L-threonyl-[protein] + ADP + H(+). Functionally, serine/threonine-protein kinase that may function as a signaling receptor of extracellular matrix component. Binding to pectin may have significance in the control of cell expansion, morphogenesis and development. This is Wall-associated receptor kinase 2 (WAK2) from Arabidopsis thaliana (Mouse-ear cress).